The chain runs to 157 residues: Protein MG115 (157 aa).

The protein belongs to the CinA family.

This is Protein MG115 from Mycoplasma genitalium (strain ATCC 33530 / DSM 19775 / NCTC 10195 / G37) (Mycoplasmoides genitalium).